We begin with the raw amino-acid sequence, 213 residues long: Na(+)-translocating NADH-quinone reductase subunit D (213 aa).

7 helical membrane passes run P21–A41, L42–L62, I77–I97, L101–L121, F131–I151, E153–S173, and F183–V203.

This sequence belongs to the NqrDE/RnfAE family. Composed of six subunits; NqrA, NqrB, NqrC, NqrD, NqrE and NqrF.

It is found in the cell inner membrane. It carries out the reaction a ubiquinone + n Na(+)(in) + NADH + H(+) = a ubiquinol + n Na(+)(out) + NAD(+). Its function is as follows. NQR complex catalyzes the reduction of ubiquinone-1 to ubiquinol by two successive reactions, coupled with the transport of Na(+) ions from the cytoplasm to the periplasm. NqrA to NqrE are probably involved in the second step, the conversion of ubisemiquinone to ubiquinol. In Chlamydia abortus (strain DSM 27085 / S26/3) (Chlamydophila abortus), this protein is Na(+)-translocating NADH-quinone reductase subunit D.